Here is a 407-residue protein sequence, read N- to C-terminus: Arginine biosynthesis bifunctional protein ArgJ (407 aa).

Substrate-binding residues include T157, K183, T194, E280, N402, and T407. The Nucleophile role is filled by T194.

Belongs to the ArgJ family. As to quaternary structure, heterotetramer of two alpha and two beta chains.

The protein localises to the cytoplasm. It carries out the reaction N(2)-acetyl-L-ornithine + L-glutamate = N-acetyl-L-glutamate + L-ornithine. The catalysed reaction is L-glutamate + acetyl-CoA = N-acetyl-L-glutamate + CoA + H(+). It participates in amino-acid biosynthesis; L-arginine biosynthesis; L-ornithine and N-acetyl-L-glutamate from L-glutamate and N(2)-acetyl-L-ornithine (cyclic): step 1/1. It functions in the pathway amino-acid biosynthesis; L-arginine biosynthesis; N(2)-acetyl-L-ornithine from L-glutamate: step 1/4. Catalyzes two activities which are involved in the cyclic version of arginine biosynthesis: the synthesis of N-acetylglutamate from glutamate and acetyl-CoA as the acetyl donor, and of ornithine by transacetylation between N(2)-acetylornithine and glutamate. The polypeptide is Arginine biosynthesis bifunctional protein ArgJ (Oceanobacillus iheyensis (strain DSM 14371 / CIP 107618 / JCM 11309 / KCTC 3954 / HTE831)).